We begin with the raw amino-acid sequence, 329 residues long: Probable CTD kinase subunit alpha homolog (329 aa).

A Protein kinase domain is found at 22-297 (YEKIRIIGEG…VEQVVGSKYF (276 aa)). ATP contacts are provided by residues 28 to 36 (IGEGTFGQV) and Lys-49. Catalysis depends on Asp-139, which acts as the Proton acceptor.

This sequence belongs to the protein kinase superfamily. CMGC Ser/Thr protein kinase family. CDC2/CDKX subfamily. Component of the CTDK-I complex.

Its subcellular location is the nucleus. It is found in the nucleolus. The catalysed reaction is [DNA-directed RNA polymerase] + ATP = phospho-[DNA-directed RNA polymerase] + ADP + H(+). Functionally, catalytic subunit of the CTDK-I complex, which hyperphosphorylates the C-terminal heptapeptide repeat domain (CTD) of the largest RNA polymerase II subunit. Involved in RNA polymerase II transcriptional elongation and pre-mRNA 3'-end processing. The chain is Probable CTD kinase subunit alpha homolog (CTK1) from Encephalitozoon cuniculi (strain GB-M1) (Microsporidian parasite).